The following is a 695-amino-acid chain: Follicle-stimulating hormone receptor (695 aa).

The signal sequence occupies residues 1–17; sequence MALFLVALLAFLSLGSG. 2 cysteine pairs are disulfide-bonded: cysteine 18–cysteine 25 and cysteine 23–cysteine 32. The region spanning 18–46 is the LRRNT domain; the sequence is CHHRLCHCSNGVFLCQDSKVTEMPSDLPR. The Extracellular segment spans residues 18-366; it reads CHHRLCHCSN…EDIMGYDILR (349 aa). LRR repeat units follow at residues 48-70, 71-93, 96-118, 121-142, 143-167, 171-192, 194-216, 219-239, and 240-262; these read AVELRFVLTKLRVIPEGAFSGFG, DLEKIEISQNDVLEVIEANVFSN, KLHEIRIEKANNLLYIDPDAFQN, NLRYLLISNTGIKHLPAVHKIQ, SLQKVLLDIQDNINIHTVERNSFMG, ESMIVWLSKNGIQEIHNCAFNG, QLDELNLSDNSNLEELPNDVFQG, GPVILDISRTRIRSLPSYGLE, and NLKKLRAKSTYHLKKLPSLEKFV. 2 N-linked (GlcNAc...) asparagine glycosylation sites follow: asparagine 191 and asparagine 199. 4 cysteine pairs are disulfide-bonded: cysteine 275-cysteine 346, cysteine 276-cysteine 292, cysteine 276-cysteine 356, and cysteine 292-cysteine 338. Residue asparagine 293 is glycosylated (N-linked (GlcNAc...) asparagine). Tyrosine 335 bears the Sulfotyrosine mark. Residues 367-387 form a helical membrane-spanning segment; that stretch reads VLIWFISILAITGNILVLVIL. The Cytoplasmic portion of the chain corresponds to 388–398; the sequence is ITSQYKLTVPR. The chain crosses the membrane as a helical span at residues 399–421; sequence FLMCNLAFADLCIGIYLLLIASV. The Extracellular portion of the chain corresponds to 422–443; it reads DVHTKSQYHNYAIDWQTGAGCD. Cysteine 442 and cysteine 517 are oxidised to a cystine. The helical transmembrane segment at 444-465 threads the bilayer; that stretch reads AAGFFTVFASELSVYTLTAITL. The Cytoplasmic portion of the chain corresponds to 466–485; sequence ERWHTITHAMQLECKVHVRH. A helical transmembrane segment spans residues 486 to 508; the sequence is AASIMLVGWVFAFAVALFPIFGI. Topologically, residues 509–528 are extracellular; it reads SSYMKVSICLPMDIDSPLSQ. The helical transmembrane segment at 529–550 threads the bilayer; the sequence is LYVMSLLVLNVLAFVVICGCYT. Topologically, residues 551–573 are cytoplasmic; that stretch reads HIYLTVRNPNITSSSSDTKIAKR. Residues 574 to 597 traverse the membrane as a helical segment; that stretch reads MAMLIFTDFLCMAPISFFAISASL. Topologically, residues 598-608 are extracellular; it reads KVPLITVSKSK. A helical membrane pass occupies residues 609 to 630; sequence ILLVLFYPINSCANPFLYAIFT. Topologically, residues 631–695 are cytoplasmic; the sequence is RNFRRDFFIL…LIPLRHLAKN (65 aa).

The protein belongs to the G-protein coupled receptor 1 family. FSH/LSH/TSH subfamily. In terms of assembly, homotrimer. Functions as a homotrimer binding the FSH hormone heterodimer composed of CGA and FSHB. Interacts with ARRB2. Interacts with APPL2; interaction is independent of follicle stimulating hormone stimulation. N-glycosylated; indirectly required for FSH-binding, possibly via a conformational change that allows high affinity binding of hormone. In terms of processing, sulfated. As to expression, isoform FSH-R3 is expressed in ovary and testis, but not in kidney (at protein level).

The protein localises to the cell membrane. In terms of biological role, g protein-coupled receptor for follitropin, the follicle-stimulating hormone. The activity of isoform FSH-R1 is mediated by G proteins which activate adenylate cyclase. Isoform FSH-R2 and isoform FSH-R3 also bind FSH, but this does not result in activation of adenylate cyclase. Isoform FSH-R3 may be involved in calcium signaling. Through cAMP production activates the downstream PI3K-AKT and ERK1/ERK2 signaling pathways. This is Follicle-stimulating hormone receptor (FSHR) from Ovis aries (Sheep).